A 309-amino-acid chain; its full sequence is Foldase protein PrsA (309 aa).

The signal sequence occupies residues 1–22 (MKTRSKLAAGFLTLMSVATLAA). A lipid anchor (N-palmitoyl cysteine) is attached at cysteine 23. A lipid anchor (S-diacylglycerol cysteine) is attached at cysteine 23. In terms of domain architecture, PpiC spans 146 to 241 (TPETSVQVIK…TSYYIIKVTD (96 aa)).

Belongs to the PrsA family.

Its subcellular location is the cell membrane. It catalyses the reaction [protein]-peptidylproline (omega=180) = [protein]-peptidylproline (omega=0). Plays a major role in protein secretion by helping the post-translocational extracellular folding of several secreted proteins. In Streptococcus agalactiae serotype Ia (strain ATCC 27591 / A909 / CDC SS700), this protein is Foldase protein PrsA.